We begin with the raw amino-acid sequence, 399 residues long: Endonuclease III homolog 1 (399 aa).

A mitochondrion-targeting transit peptide spans 1–26 (MQKISKYSSMAILRKRPLVKTETGPE). The short motif at 14 to 37 (RKRPLVKTETGPESELLPEKRTKI) is the Bipartite nuclear localization signal element. Lysine 194 participates in a covalent cross-link: Glycyl lysine isopeptide (Lys-Gly) (interchain with G-Cter in SUMO). The 25-residue stretch at 223–247 (FSSDVPATINELLGLPGVGPKMAYL) folds into the HhH domain. Residue lysine 243 is the Nucleophile; for N-glycosylase activity of the active site.

This sequence belongs to the Nth/MutY family. Post-translationally, monosumoylated. Sumoylation is associated with targeting of NTG1 to nuclei containing oxidative DNA damage.

The protein localises to the nucleus. It localises to the mitochondrion. It carries out the reaction 2'-deoxyribonucleotide-(2'-deoxyribose 5'-phosphate)-2'-deoxyribonucleotide-DNA = a 3'-end 2'-deoxyribonucleotide-(2,3-dehydro-2,3-deoxyribose 5'-phosphate)-DNA + a 5'-end 5'-phospho-2'-deoxyribonucleoside-DNA + H(+). Its function is as follows. Bifunctional DNA N-glycosylase with associated apurinic/apyrimidinic (AP) lyase function that catalyzes the first step in base excision repair (BER), the primary repair pathway for the repair of oxidative DNA damage. The DNA N-glycosylase activity releases the damaged DNA base from DNA by cleaving the N-glycosidic bond, leaving an AP site. The AP-lyase activity cleaves the phosphodiester bond 3' to the AP site by a beta-elimination. Primarily recognizes and repairs oxidative base damage of pyrimidines, but also purine-derived lesions, alkylation damage and cytosine photoproducts generated by UV irradiation as well as abasic sites. Also has 8-oxoguanine DNA glycosylase activity. The AP lyase can incise AP sites opposite all four bases. May also play a role in the regulation of mtDNA copy number by introducing a double-stranded break (DSB) at the mtDNA replication origin ori5, initiating the rolling-circle mtDNA replication. The chain is Endonuclease III homolog 1 from Saccharomyces cerevisiae (strain ATCC 204508 / S288c) (Baker's yeast).